The chain runs to 158 residues: MGRSRSRSPERRRERRRSRSASRERERRRRERSRSRERRRSRSRSPHRRRSRSPRRHRSSSISPSRLKDRRDDDKKEPKESKGGGSKERQLAAEDLEGKTEEEIEMMKLMGFASFDSSKGKKTDGSVNAYAINVSQKRKYRQYMNRKGGFNRPLDFVA.

Residues 1 to 102 (MGRSRSRSPE…AEDLEGKTEE (102 aa)) form a disordered region. The segment covering 13-59 (RERRRSRSASRERERRRRERSRSRERRRSRSRSPHRRRSRSPRRHRS) has biased composition (basic residues). Residues 66–101 (RLKDRRDDDKKEPKESKGGGSKERQLAAEDLEGKTE) show a composition bias toward basic and acidic residues.

Belongs to the SNUT3 family. As to quaternary structure, part of a tri-snRNP complex.

The protein localises to the nucleus. In terms of biological role, may play a role in mRNA splicing. The protein is U4/U6.U5 small nuclear ribonucleoprotein 27 kDa protein (snrnp27) of Xenopus laevis (African clawed frog).